A 378-amino-acid chain; its full sequence is Chaperone protein DnaJ 2 (378 aa).

Residues 4 to 68 (DYYAVLGVRR…QKKQVYDLGG (65 aa)) form the J domain. The CR-type zinc finger occupies 130–212 (GTTKDIQVDT…CAGDGRVRSR (83 aa)). Residues Cys-143, Cys-146, Cys-160, Cys-163, Cys-186, Cys-189, Cys-200, and Cys-203 each coordinate Zn(2+). CXXCXGXG motif repeat units lie at residues 143-150 (CNTCNGEG), 160-167 (CDMCRGRG), 186-193 (CPQCQGFG), and 200-207 (CPECAGDG). 2 disordered regions span residues 297 to 319 (RPGT…LRGG) and 351 to 378 (RGEE…FNGR). Residues 358-367 (GQFQPGQQGL) show a composition bias toward polar residues.

This sequence belongs to the DnaJ family. As to quaternary structure, homodimer. Requires Zn(2+) as cofactor.

Its subcellular location is the cytoplasm. Its function is as follows. Participates actively in the response to hyperosmotic and heat shock by preventing the aggregation of stress-denatured proteins and by disaggregating proteins, also in an autonomous, DnaK-independent fashion. Unfolded proteins bind initially to DnaJ; upon interaction with the DnaJ-bound protein, DnaK hydrolyzes its bound ATP, resulting in the formation of a stable complex. GrpE releases ADP from DnaK; ATP binding to DnaK triggers the release of the substrate protein, thus completing the reaction cycle. Several rounds of ATP-dependent interactions between DnaJ, DnaK and GrpE are required for fully efficient folding. Also involved, together with DnaK and GrpE, in the DNA replication of plasmids through activation of initiation proteins. The sequence is that of Chaperone protein DnaJ 2 from Streptomyces coelicolor (strain ATCC BAA-471 / A3(2) / M145).